Reading from the N-terminus, the 276-residue chain is UPF0276 protein PA4106 (276 aa).

This sequence belongs to the UPF0276 family.

The protein is UPF0276 protein PA4106 of Pseudomonas aeruginosa (strain ATCC 15692 / DSM 22644 / CIP 104116 / JCM 14847 / LMG 12228 / 1C / PRS 101 / PAO1).